The chain runs to 211 residues: Fucoxanthin-chlorophyll a-c binding protein F, chloroplastic (211 aa).

Residues 1 to 33 (AIACAAAPGLRGPSAFNGAALSTPAKSSSAMKM) constitute a chloroplast transit peptide. 3 helical membrane passes run 75 to 95 (IAMLAIAGHLTQQNTRLPGML), 116 to 136 (IPPGGLAQIFGFIGFLELAVM), and 177 to 197 (GRAAQMGILGMMVHEELSNQP).

The protein belongs to the fucoxanthin chlorophyll protein family. In terms of assembly, the LHC complex of chromophytic algae is composed of fucoxanthin, chlorophyll A and C bound non-covalently by fucoxanthin chlorophyll proteins (FCPs). The ratio of pigments in this LHC is; fucoxanthin: chlorophyll C: chlorophyll A; (0.6-1): (0.1-0.3): (1).

Its subcellular location is the plastid. It localises to the chloroplast thylakoid membrane. Functionally, the light-harvesting complex (LHC) functions as a light receptor, it captures and delivers excitation energy to photosystems with which it is closely associated. Energy is transferred from the carotenoid and chlorophyll C (or B) to chlorophyll A and the photosynthetic reaction centers where it is used to synthesize ATP and reducing power. This chain is Fucoxanthin-chlorophyll a-c binding protein F, chloroplastic (FCPF), found in Macrocystis pyrifera (Giant kelp).